We begin with the raw amino-acid sequence, 237 residues long: Ubiquinone biosynthesis O-methyltransferase (237 aa).

4 residues coordinate S-adenosyl-L-methionine: Arg-38, Gly-58, Asp-79, and Met-124.

Belongs to the methyltransferase superfamily. UbiG/COQ3 family.

The catalysed reaction is a 3-demethylubiquinol + S-adenosyl-L-methionine = a ubiquinol + S-adenosyl-L-homocysteine + H(+). It carries out the reaction a 3-(all-trans-polyprenyl)benzene-1,2-diol + S-adenosyl-L-methionine = a 2-methoxy-6-(all-trans-polyprenyl)phenol + S-adenosyl-L-homocysteine + H(+). It functions in the pathway cofactor biosynthesis; ubiquinone biosynthesis. In terms of biological role, O-methyltransferase that catalyzes the 2 O-methylation steps in the ubiquinone biosynthetic pathway. The chain is Ubiquinone biosynthesis O-methyltransferase from Acinetobacter baumannii (strain ACICU).